The chain runs to 89 residues: Small ribosomal subunit protein bS18 (89 aa).

This sequence belongs to the bacterial ribosomal protein bS18 family. As to quaternary structure, part of the 30S ribosomal subunit. Forms a tight heterodimer with protein bS6.

Its function is as follows. Binds as a heterodimer with protein bS6 to the central domain of the 16S rRNA, where it helps stabilize the platform of the 30S subunit. The chain is Small ribosomal subunit protein bS18 from Parabacteroides distasonis (strain ATCC 8503 / DSM 20701 / CIP 104284 / JCM 5825 / NCTC 11152).